The sequence spans 938 residues: Myocardin (938 aa).

The short motif at 12-27 (IRSKFRSVLQLRLQQR) is the MEF2C-binding element. An RPEL 1 repeat occupies 18–43 (SVLQLRLQQRRTQEQLANQGIIPPLK). The segment covering 48 to 61 (FHEQRKHLDSDKAK) has biased composition (basic and acidic residues). The tract at residues 48-68 (FHEQRKHLDSDKAKNSLKRKA) is disordered. RPEL repeat units follow at residues 62–87 (NSLK…QAST) and 106–131 (DDLN…PVDS). The interval 153–205 (FEEDSSSDGLSPDQTRSEDPQNSAGSPPDAKASDTPSTGSLGTNQDLASGSEN) is HDAC5-binding. The interval 154–281 (EEDSSSDGLS…DQKAEKSPPP (128 aa)) is disordered. Composition is skewed to polar residues over residues 159 to 177 (SDGL…NSAG), 186 to 203 (DTPS…ASGS), and 210 to 220 (SASQPSHQSDA). A compositionally biased stretch (basic residues) spans 248–265 (NRHKKPKDPKPKVKKLKY). An SAP domain is found at 371–405 (LDDLKVSELRQQLRIRGLPVSGTKTALMDRLRPFQ). Serine 451, serine 455, serine 459, and serine 463 each carry phosphoserine; by GSK3-beta. Residues 516–561 (EKDKMLVEKQKVINELTWKLQQEQRQVEELRMQLQKQKRNNCSEKK) adopt a coiled-coil conformation. Phosphoserine; by GSK3-beta is present on residues serine 626, serine 630, serine 634, and serine 638. 2 disordered regions span residues 635–678 (PQHS…SSPI) and 693–734 (SDKV…MTRS). Over residues 699 to 715 (KFSIPSPTFSKSSSAIS) the composition is skewed to low complexity. The interval 717 to 938 (VTQPPSYEDA…SSMDLHLQQW (222 aa)) is required for interaction with and ubiquitination by STUB1. Residues serine 815, serine 862, and serine 869 each carry the phosphoserine; by MAPK1 and MAPK3 modification. Threonine 896 carries the post-translational modification Phosphothreonine; by MAPK1 and MAPK3.

Homodimer. Interacts with SRF, its association does not depend on specific DNA sequences for ternary complex formation. Interacts with MLLT7/FOXO4. Interacts (via C-terminal) with EP300 (via the CREB-binding domain). Interacts with HDAC4 and HDAC5. Interacts with MEF2C. Interacts (via C-terminus) with STUB1/CHIP. Interacts with PURB. Post-translationally, ubiquitinated; by STUB1/CHIP at the C-terminus, leading to its degradation by the proteasome. Phosphorylation by GSK3B is required for STUB1/CHIP-mediated ubiquitination. Phosphorylation negatively regulates the intrinsic myocardin transcriptional activity. Phosphorylated; by GSK3B. As to expression, expressed in the heart, aorta and bladder. Expressed in smooth muscle cell-containing tissues: stomach, small intestine, colon, lung, placenta and uterus. Very faint expression in prostate and skeletal muscle.

The protein resides in the nucleus. In terms of biological role, smooth muscle cells (SM) and cardiac muscle cells-specific transcriptional factor which uses the canonical single or multiple CArG boxes DNA sequence. Acts as a cofactor of serum response factor (SRF) with the potential to modulate SRF-target genes. Plays a crucial role in cardiogenesis, urinary bladder development, and differentiation of the smooth muscle cell lineage (myogenesis). Positively regulates the transcription of genes involved in vascular smooth muscle contraction. The polypeptide is Myocardin (MYOCD) (Homo sapiens (Human)).